The following is a 225-amino-acid chain: Biosynthetic peptidoglycan transglycosylase (225 aa).

A helical transmembrane segment spans residues 9 to 29; the sequence is LLIFIGAILLIQLWIFSSLVW.

It belongs to the glycosyltransferase 51 family.

It is found in the cell inner membrane. It catalyses the reaction [GlcNAc-(1-&gt;4)-Mur2Ac(oyl-L-Ala-gamma-D-Glu-L-Lys-D-Ala-D-Ala)](n)-di-trans,octa-cis-undecaprenyl diphosphate + beta-D-GlcNAc-(1-&gt;4)-Mur2Ac(oyl-L-Ala-gamma-D-Glu-L-Lys-D-Ala-D-Ala)-di-trans,octa-cis-undecaprenyl diphosphate = [GlcNAc-(1-&gt;4)-Mur2Ac(oyl-L-Ala-gamma-D-Glu-L-Lys-D-Ala-D-Ala)](n+1)-di-trans,octa-cis-undecaprenyl diphosphate + di-trans,octa-cis-undecaprenyl diphosphate + H(+). Its pathway is cell wall biogenesis; peptidoglycan biosynthesis. Its function is as follows. Peptidoglycan polymerase that catalyzes glycan chain elongation from lipid-linked precursors. This chain is Biosynthetic peptidoglycan transglycosylase, found in Acinetobacter baumannii (strain SDF).